Here is a 202-residue protein sequence, read N- to C-terminus: UPF0301 protein ML0028 (202 aa).

The protein belongs to the UPF0301 (AlgH) family.

The sequence is that of UPF0301 protein ML0028 from Mycobacterium leprae (strain TN).